We begin with the raw amino-acid sequence, 434 residues long: UPF0053 protein YrkA (434 aa).

The CNNM transmembrane domain occupies 1–201; sequence MTTINLIIFT…YKSGEINQNE (201 aa). Transmembrane regions (helical) follow at residues 7 to 27, 64 to 84, and 101 to 121; these read IIFT…FAIV, LGIT…FEVI, and VLIL…VGEL. CBS domains are found at residues 220-282 and 289-346; these read MIPR…KIKE and HINP…IRDE.

The protein belongs to the UPF0053 family.

The protein resides in the cell membrane. This is UPF0053 protein YrkA (yrkA) from Bacillus subtilis (strain 168).